We begin with the raw amino-acid sequence, 125 residues long: SKP1-like protein 7 (125 aa).

The interval 94 to 125 (MNAAYDLHIKSLLALAYQTVADMVNDNKWAFE) is interaction with the F-box domain of F-box proteins.

The protein belongs to the SKP1 family. In terms of assembly, part of a SCF (SKP1-cullin-F-box) protein ligase complex. Restricted to siliques.

The protein resides in the nucleus. Its pathway is protein modification; protein ubiquitination. In terms of biological role, involved in ubiquitination and subsequent proteasomal degradation of target proteins. Together with CUL1, RBX1 and a F-box protein, it forms a SCF E3 ubiquitin ligase complex. The functional specificity of this complex depends on the type of F-box protein. In the SCF complex, it serves as an adapter that links the F-box protein to CUL1. This Arabidopsis thaliana (Mouse-ear cress) protein is SKP1-like protein 7 (ASK7).